Reading from the N-terminus, the 344-residue chain is Biotin synthase (344 aa).

Residues 40–267 enclose the Radical SAM core domain; that stretch reads AEVQVSTLLS…KSMVRLSAGR (228 aa). [4Fe-4S] cluster-binding residues include Cys-55, Cys-59, and Cys-62. [2Fe-2S] cluster is bound by residues Cys-99, Cys-130, Cys-190, and Arg-262.

This sequence belongs to the radical SAM superfamily. Biotin synthase family. As to quaternary structure, homodimer. The cofactor is [4Fe-4S] cluster. [2Fe-2S] cluster is required as a cofactor.

It carries out the reaction (4R,5S)-dethiobiotin + (sulfur carrier)-SH + 2 reduced [2Fe-2S]-[ferredoxin] + 2 S-adenosyl-L-methionine = (sulfur carrier)-H + biotin + 2 5'-deoxyadenosine + 2 L-methionine + 2 oxidized [2Fe-2S]-[ferredoxin]. Its pathway is cofactor biosynthesis; biotin biosynthesis; biotin from 7,8-diaminononanoate: step 2/2. Its function is as follows. Catalyzes the conversion of dethiobiotin (DTB) to biotin by the insertion of a sulfur atom into dethiobiotin via a radical-based mechanism. The protein is Biotin synthase of Xanthomonas oryzae pv. oryzae (strain PXO99A).